Reading from the N-terminus, the 222-residue chain is uncharacterized protein (222 aa).

A coiled-coil region spans residues 43–73 (SQNEEFEYEMERMLSILNEQTMDLTQLQSRI).

This is an uncharacterized protein from Rickettsia conorii (strain ATCC VR-613 / Malish 7).